Consider the following 297-residue polypeptide: Phosphatidylserine decarboxylase proenzyme (297 aa).

Catalysis depends on charge relay system; for autoendoproteolytic cleavage activity residues Asp112, His168, and Ser255. Ser255 functions as the Schiff-base intermediate with substrate; via pyruvic acid; for decarboxylase activity in the catalytic mechanism. Ser255 carries the post-translational modification Pyruvic acid (Ser); by autocatalysis.

It belongs to the phosphatidylserine decarboxylase family. PSD-B subfamily. Prokaryotic type II sub-subfamily. Heterodimer of a large membrane-associated beta subunit and a small pyruvoyl-containing alpha subunit. Requires pyruvate as cofactor. In terms of processing, is synthesized initially as an inactive proenzyme. Formation of the active enzyme involves a self-maturation process in which the active site pyruvoyl group is generated from an internal serine residue via an autocatalytic post-translational modification. Two non-identical subunits are generated from the proenzyme in this reaction, and the pyruvate is formed at the N-terminus of the alpha chain, which is derived from the carboxyl end of the proenzyme. The autoendoproteolytic cleavage occurs by a canonical serine protease mechanism, in which the side chain hydroxyl group of the serine supplies its oxygen atom to form the C-terminus of the beta chain, while the remainder of the serine residue undergoes an oxidative deamination to produce ammonia and the pyruvoyl prosthetic group on the alpha chain. During this reaction, the Ser that is part of the protease active site of the proenzyme becomes the pyruvoyl prosthetic group, which constitutes an essential element of the active site of the mature decarboxylase.

Its subcellular location is the cell membrane. It carries out the reaction a 1,2-diacyl-sn-glycero-3-phospho-L-serine + H(+) = a 1,2-diacyl-sn-glycero-3-phosphoethanolamine + CO2. It participates in phospholipid metabolism; phosphatidylethanolamine biosynthesis; phosphatidylethanolamine from CDP-diacylglycerol: step 2/2. Catalyzes the formation of phosphatidylethanolamine (PtdEtn) from phosphatidylserine (PtdSer). In Clostridium tetani (strain Massachusetts / E88), this protein is Phosphatidylserine decarboxylase proenzyme.